The following is a 359-amino-acid chain: METLTASFFVRIASSIRAGYPTNMTDPIALVDRFGRRHDSLRISITDRCNIRCFYCMPEHDAEFLPRSGVLTFEEIERLAGLLVKRCGVRDIRITGGEPLVRRDCVDLIRMLARIDGLEDLSMTTNGMLLRDHAADLRSAGLKRLNVSLDTLDEATFVKIARRPGVDRVIDGIDAAIEAGFESIKLNALAIRGLSESELVGLVRFSIEKSVTLRFIEFMPLDSDRAWKSKDVLSGDACLKLLSEAFGDVTPTGRENPSAPAETFTLRCDGREGTIGIIRSVTRPFCGDCNRLRLTADGGLRNCLFSQSETPLRDAMRSGCDDDKLIQKIQQCVGEKHAAHGIDSDDFRPPERAMHAIGG.

In terms of domain architecture, Radical SAM core spans 33 to 260 (RFGRRHDSLR…PTGRENPSAP (228 aa)). Arg-42 contributes to the GTP binding site. The [4Fe-4S] cluster site is built by Cys-49 and Cys-53. Tyr-55 is a binding site for S-adenosyl-L-methionine. [4Fe-4S] cluster is bound at residue Cys-56. A GTP-binding site is contributed by Arg-93. Residue Gly-97 coordinates S-adenosyl-L-methionine. Thr-124 is a GTP binding site. Ser-148 contacts S-adenosyl-L-methionine. Lys-185 serves as a coordination point for GTP. Residue Met-219 participates in S-adenosyl-L-methionine binding. 2 residues coordinate [4Fe-4S] cluster: Cys-286 and Cys-289. GTP is bound at residue 291–293 (RLR). Cys-303 provides a ligand contact to [4Fe-4S] cluster.

It belongs to the radical SAM superfamily. MoaA family. Monomer and homodimer. [4Fe-4S] cluster serves as cofactor.

It catalyses the reaction GTP + AH2 + S-adenosyl-L-methionine = (8S)-3',8-cyclo-7,8-dihydroguanosine 5'-triphosphate + 5'-deoxyadenosine + L-methionine + A + H(+). Its pathway is cofactor biosynthesis; molybdopterin biosynthesis. In terms of biological role, catalyzes the cyclization of GTP to (8S)-3',8-cyclo-7,8-dihydroguanosine 5'-triphosphate. The sequence is that of GTP 3',8-cyclase from Rhodopirellula baltica (strain DSM 10527 / NCIMB 13988 / SH1).